A 291-amino-acid polypeptide reads, in one-letter code: Trimeric intracellular cation channel type B (291 aa).

Residues 1-15 are Lumenal-facing; that stretch reads MESPWNELTLAFSRT. Residues 16–33 form a helical membrane-spanning segment; the sequence is SMFPFFDIAHYLVSVMAL. The Cytoplasmic portion of the chain corresponds to 34–47; it reads KHQPGAAALAWKNP. Residues 48–69 traverse the membrane as a helical segment; sequence LSSWFTAMLHCFGGGILSCVLL. Over 70–80 the chain is Lumenal; the sequence is AEPPLRFLANN. A helical transmembrane segment spans residues 81-100; that stretch reads TNILLASSIWYIAFFCPCDL. The Cytoplasmic segment spans residues 101-103; sequence ISQ. A helical membrane pass occupies residues 104-122; sequence AYSFLPVQLLAAGMKEVTR. A 1,2-diacyl-sn-glycero-3-phospho-(1D-myo-inositol-4,5-bisphosphate) contacts are provided by Lys118 and Arg122. Residues 123-138 are Lumenal-facing; that stretch reads TWKIVGGVTHANSYYK. The helical transmembrane segment at 139–156 threads the bilayer; sequence NGWIVMIAVGWARGAGGS. At 157–179 the chain is on the cytoplasmic side; sequence IITNFEQLVKGCWKPEAEEWLKM. The chain crosses the membrane as a helical span at residues 180-196; the sequence is SYPAKVTLLGSVIFTFQ. Residues 197–207 are Lumenal-facing; the sequence is QTKYLAISKHN. A helical membrane pass occupies residues 208 to 225; sequence LMFLFTVFLVATKITMMI. The Cytoplasmic portion of the chain corresponds to 226-291; it reads TKTALVPFAC…VKKKHSKKTE (66 aa). The disordered stretch occupies residues 257–291; it reads KSETKSSFNGTGSSTSKPVANASDKVKKKHSKKTE. Positions 261–274 are enriched in polar residues; the sequence is KSSFNGTGSSTSKP. Ser262 bears the Phosphoserine mark. Over residues 282–291 the composition is skewed to basic residues; sequence VKKKHSKKTE.

This sequence belongs to the TMEM38 family. As to quaternary structure, homotrimer; conformation seems to be controled by binding to diacylglycerol (DAG).

Its subcellular location is the endoplasmic reticulum membrane. It catalyses the reaction K(+)(in) = K(+)(out). Channel activity is activated by increased cytosolic Ca(2+) levels and blocked by luminal high Ca(2+) levels. In terms of biological role, intracellular monovalent cation channel required for maintenance of rapid intracellular calcium release. Acts as a potassium counter-ion channel that functions in synchronization with calcium release from intracellular stores. Activated by increased cytosolic Ca(2+) levels. The polypeptide is Trimeric intracellular cation channel type B (TMEM38B) (Bos taurus (Bovine)).